We begin with the raw amino-acid sequence, 349 residues long: 4-hydroxy-tetrahydrodipicolinate reductase 2, chloroplastic (349 aa).

A chloroplast-targeting transit peptide spans M1–V53. Residues G81–M86, G173–T175, and S196–M199 contribute to the NAD(+) site. H232 serves as the catalytic Proton donor/acceptor. The active-site Proton donor is the K236. A (S)-2,3,4,5-tetrahydrodipicolinate-binding site is contributed by G241–T242.

The protein belongs to the DapB family.

It localises to the plastid. The protein localises to the chloroplast. It carries out the reaction (S)-2,3,4,5-tetrahydrodipicolinate + NAD(+) + H2O = (2S,4S)-4-hydroxy-2,3,4,5-tetrahydrodipicolinate + NADH + H(+). The catalysed reaction is (S)-2,3,4,5-tetrahydrodipicolinate + NADP(+) + H2O = (2S,4S)-4-hydroxy-2,3,4,5-tetrahydrodipicolinate + NADPH + H(+). It participates in amino-acid biosynthesis; L-lysine biosynthesis via DAP pathway; (S)-tetrahydrodipicolinate from L-aspartate: step 4/4. Its function is as follows. Catalyzes the conversion of 4-hydroxy-tetrahydrodipicolinate (HTPA) to tetrahydrodipicolinate. This is 4-hydroxy-tetrahydrodipicolinate reductase 2, chloroplastic (DAPB2) from Arabidopsis thaliana (Mouse-ear cress).